A 154-amino-acid chain; its full sequence is Superoxide dismutase [Cu-Zn] (154 aa).

Cu cation contacts are provided by His47, His49, and His64. Residues Cys58 and Cys147 are joined by a disulfide bond. Residues His64, His72, His81, and Asp84 each contribute to the Zn(2+) site. His121 contacts Cu cation. The segment covering 125–136 (DDLGKGGNEESL) has biased composition (basic and acidic residues). Positions 125–144 (DDLGKGGNEESLKTGNAGPR) are disordered. Residue Arg144 coordinates substrate.

The protein belongs to the Cu-Zn superoxide dismutase family. As to quaternary structure, homodimer. It depends on Cu cation as a cofactor. Zn(2+) serves as cofactor.

The protein localises to the cytoplasm. The catalysed reaction is 2 superoxide + 2 H(+) = H2O2 + O2. Its function is as follows. Destroys radicals which are normally produced within the cells and which are toxic to biological systems. This is Superoxide dismutase [Cu-Zn] (SOD1) from Cordyceps tenuipes (Entomopathogenic fungus).